Consider the following 347-residue polypeptide: Cell shape-determining protein MreB (347 aa).

ATP is bound by residues 19-21 (TAN), 168-170 (GGT), 216-219 (ERIK), and 296-299 (GGAL).

This sequence belongs to the FtsA/MreB family. In terms of assembly, forms polymers.

It localises to the cytoplasm. Its function is as follows. Forms membrane-associated dynamic filaments that are essential for cell shape determination. Acts by regulating cell wall synthesis and cell elongation, and thus cell shape. A feedback loop between cell geometry and MreB localization may maintain elongated cell shape by targeting cell wall growth to regions of negative cell wall curvature. The polypeptide is Cell shape-determining protein MreB (Escherichia coli O6:H1 (strain CFT073 / ATCC 700928 / UPEC)).